The sequence spans 298 residues: Tyrosine recombinase XerD (298 aa).

A Core-binding (CB) domain is found at 2-87 (KQDLARIEQF…AVRRLFQYLY (86 aa)). In terms of domain architecture, Tyr recombinase spans 108-292 (RLPKDLSEAQ…ATERLRQLHQ (185 aa)). Active-site residues include R148, K172, H244, R247, and H270. Y279 (O-(3'-phospho-DNA)-tyrosine intermediate) is an active-site residue.

It belongs to the 'phage' integrase family. XerD subfamily. Forms a cyclic heterotetrameric complex composed of two molecules of XerC and two molecules of XerD, in which XerC interacts with XerD via its C-terminal region, XerD interacts with XerC via its C-terminal region and so on.

It localises to the cytoplasm. With respect to regulation, ftsK may regulate the catalytic switch between XerC and XerD in the heterotetrameric complex during the two steps of the recombination process. In terms of biological role, site-specific tyrosine recombinase, which acts by catalyzing the cutting and rejoining of the recombining DNA molecules. Binds cooperatively to specific DNA consensus sequences that are separated from XerC binding sites by a short central region, forming the heterotetrameric XerC-XerD complex that recombines DNA substrates. The complex is essential to convert dimers of the bacterial chromosome into monomers to permit their segregation at cell division. It also contributes to the segregational stability of plasmids. In the complex XerD specifically exchanges the bottom DNA strands. The chain is Tyrosine recombinase XerD from Escherichia coli O157:H7.